The following is a 335-amino-acid chain: Nucleoid-associated protein KPK_1538 (335 aa).

The protein belongs to the YejK family.

It is found in the cytoplasm. The protein localises to the nucleoid. This is Nucleoid-associated protein KPK_1538 from Klebsiella pneumoniae (strain 342).